Consider the following 295-residue polypeptide: Ribosomal RNA small subunit methyltransferase A (295 aa).

Positions 29, 31, 56, 77, 102, and 128 each coordinate S-adenosyl-L-methionine.

The protein belongs to the class I-like SAM-binding methyltransferase superfamily. rRNA adenine N(6)-methyltransferase family. RsmA subfamily.

It localises to the cytoplasm. The enzyme catalyses adenosine(1518)/adenosine(1519) in 16S rRNA + 4 S-adenosyl-L-methionine = N(6)-dimethyladenosine(1518)/N(6)-dimethyladenosine(1519) in 16S rRNA + 4 S-adenosyl-L-homocysteine + 4 H(+). Functionally, specifically dimethylates two adjacent adenosines (A1518 and A1519) in the loop of a conserved hairpin near the 3'-end of 16S rRNA in the 30S particle. May play a critical role in biogenesis of 30S subunits. The protein is Ribosomal RNA small subunit methyltransferase A of Listeria monocytogenes serovar 1/2a (strain ATCC BAA-679 / EGD-e).